A 1354-amino-acid chain; its full sequence is Phosphoribosylformylglycinamidine synthase (1354 aa).

Residues 327–338, 407–409, and Ala714 each bind ATP; these read GATTGTGGRLRD and SGF. Asp715, Glu754, Asn758, and Asp918 together coordinate Mg(2+). Position 920 (Ser920) interacts with ATP. The region spanning 1087–1337 is the Glutamine amidotransferase type-1 domain; that stretch reads VAVLREEGVN…EVSPTQSESP (251 aa). The active-site Nucleophile is the Cys1180. Catalysis depends on residues His1310 and Glu1312.

The protein in the N-terminal section; belongs to the FGAMS family.

The catalysed reaction is N(2)-formyl-N(1)-(5-phospho-beta-D-ribosyl)glycinamide + L-glutamine + ATP + H2O = 2-formamido-N(1)-(5-O-phospho-beta-D-ribosyl)acetamidine + L-glutamate + ADP + phosphate + H(+). The protein operates within purine metabolism; IMP biosynthesis via de novo pathway; 5-amino-1-(5-phospho-D-ribosyl)imidazole from N(2)-formyl-N(1)-(5-phospho-D-ribosyl)glycinamide: step 1/2. In terms of biological role, phosphoribosylformylglycinamidine synthase involved in the purines biosynthetic pathway. Catalyzes the ATP-dependent conversion of formylglycinamide ribonucleotide (FGAR) and glutamine to yield formylglycinamidine ribonucleotide (FGAM) and glutamate. Because of its role in metabolisms, is involved in sleep regulation. The chain is Phosphoribosylformylglycinamidine synthase from Drosophila melanogaster (Fruit fly).